Reading from the N-terminus, the 90-residue chain is Small ribosomal subunit protein bS20 (90 aa).

Residues 1 to 11 (MAHHKSAKKRI) show a composition bias toward basic residues. The segment at 1–22 (MAHHKSAKKRIRQTERRTEVNR) is disordered. Positions 12-22 (RQTERRTEVNR) are enriched in basic and acidic residues.

This sequence belongs to the bacterial ribosomal protein bS20 family.

Its function is as follows. Binds directly to 16S ribosomal RNA. In Paramagnetospirillum magneticum (strain ATCC 700264 / AMB-1) (Magnetospirillum magneticum), this protein is Small ribosomal subunit protein bS20.